A 407-amino-acid polypeptide reads, in one-letter code: Phosphopentomutase (407 aa).

Mn(2+)-binding residues include aspartate 10, aspartate 306, histidine 311, aspartate 347, histidine 348, and histidine 359.

The protein belongs to the phosphopentomutase family. Mn(2+) serves as cofactor.

Its subcellular location is the cytoplasm. The enzyme catalyses 2-deoxy-alpha-D-ribose 1-phosphate = 2-deoxy-D-ribose 5-phosphate. It carries out the reaction alpha-D-ribose 1-phosphate = D-ribose 5-phosphate. It functions in the pathway carbohydrate degradation; 2-deoxy-D-ribose 1-phosphate degradation; D-glyceraldehyde 3-phosphate and acetaldehyde from 2-deoxy-alpha-D-ribose 1-phosphate: step 1/2. Isomerase that catalyzes the conversion of deoxy-ribose 1-phosphate (dRib-1-P) and ribose 1-phosphate (Rib-1-P) to deoxy-ribose 5-phosphate (dRib-5-P) and ribose 5-phosphate (Rib-5-P), respectively. This chain is Phosphopentomutase, found in Pectobacterium carotovorum subsp. carotovorum (strain PC1).